The primary structure comprises 78 residues: MLVLTRKQNESIMIGDDIEITVVGTEGDKVRLGIKAPKDVEIHRAEVYQKIQEENVKASQVSENVLDKLSDALQKKNK.

It belongs to the CsrA/RsmA family. In terms of assembly, homodimer; the beta-strands of each monomer intercalate to form a hydrophobic core, while the alpha-helices form wings that extend away from the core.

It localises to the cytoplasm. A translational regulator that binds mRNA to regulate translation initiation and/or mRNA stability. Usually binds in the 5'-UTR at or near the Shine-Dalgarno sequence preventing ribosome-binding, thus repressing translation. Its main target seems to be the major flagellin gene, while its function is anatagonized by FliW. This chain is Translational regulator CsrA, found in Natranaerobius thermophilus (strain ATCC BAA-1301 / DSM 18059 / JW/NM-WN-LF).